We begin with the raw amino-acid sequence, 111 residues long: MSDIPAGDYEKGKKVYKQRCLQCHVVDSTATKTGPTLHGVIGRTSGTVSGFDYSAANKNKGVVWTKETLFEYLLNPKKYIPGTKMVFAGLKKADERADLIKYIEVESAKSL.

Position 2 is an N-acetylserine (Ser-2). Residues Cys-20, Cys-23, His-24, and Met-85 each contribute to the heme c site.

The protein belongs to the cytochrome c family. In terms of processing, binds 1 heme c group covalently per subunit.

The protein localises to the mitochondrion intermembrane space. In terms of biological role, electron carrier protein. The oxidized form of the cytochrome c heme group can accept an electron from the heme group of the cytochrome c1 subunit of cytochrome reductase. Cytochrome c then transfers this electron to the cytochrome oxidase complex, the final protein carrier in the mitochondrial electron-transport chain. This chain is Cytochrome c 2.1 (cyc-2.1), found in Caenorhabditis elegans.